The chain runs to 380 residues: tRNA pseudouridine synthase B (380 aa).

Asp-63 serves as the catalytic Nucleophile. The disordered stretch occupies residues 309 to 339; it reads QNVEDDNDDNDDNDDNDDNDDNDDNDDNDDN. Acidic residues predominate over residues 311–338; that stretch reads VEDDNDDNDDNDDNDDNDDNDDNDDNDD.

This sequence belongs to the pseudouridine synthase TruB family. Type 1 subfamily.

It carries out the reaction uridine(55) in tRNA = pseudouridine(55) in tRNA. Its function is as follows. Responsible for synthesis of pseudouridine from uracil-55 in the psi GC loop of transfer RNAs. In Psychrobacter arcticus (strain DSM 17307 / VKM B-2377 / 273-4), this protein is tRNA pseudouridine synthase B.